The sequence spans 185 residues: Protein-arginine kinase activator protein (185 aa).

Residues arginine 115 and arginine 169 each carry the phosphoarginine modification. The UVR domain occupies 139-174 (RRQIDMLKKELESLIHQEEFENAAHVRDQIRLLEQS).

In terms of assembly, interacts with McsB. Post-translationally, phosphorylated on Arg residues by McsB.

Functionally, activates the phosphorylation activity of the protein-arginine kinase McsB. Is required for the delocalization of competence proteins from the cell poles. The sequence is that of Protein-arginine kinase activator protein (mcsA) from Bacillus subtilis (strain 168).